Reading from the N-terminus, the 373-residue chain is MTDADYAEQLKDLDATLRNIESVLDIDRLRADKARLEEAASAPDLWDDQARAQQVTSQLSYVNGEINKLAELRSRLDDAKVLLELAEAESDPGALTEVEAEVAGLAKAIDEMEVRTLLSGEYDSREALVAIRAGAGGVDAADFAEMLLRMYLRWAERHGYPTEVYETSYAEEAGLKSATFTVKVPYAYGTLSVESGTHRLVRISPFDNQGRRQTSFAGVEVLPVVEQTDHIDIPENEMRFDVYRSSGPGGQSVNTTDSAVRITHIPTGIVVTCQNEKSQLQNKASALRVLQARLLERKRQEEQAKLQGLKTDAAGSWGDQMRSYVLHPYQMVKDLRTEQETGTPAAVFDGELDAFIEAGIRWRKQQQLADDNA.

Residue glutamine 251 is modified to N5-methylglutamine.

The protein belongs to the prokaryotic/mitochondrial release factor family. In terms of processing, methylated by PrmC. Methylation increases the termination efficiency of RF2.

The protein localises to the cytoplasm. Its function is as follows. Peptide chain release factor 2 directs the termination of translation in response to the peptide chain termination codons UGA and UAA. The polypeptide is Peptide chain release factor 2 (Salinispora tropica (strain ATCC BAA-916 / DSM 44818 / JCM 13857 / NBRC 105044 / CNB-440)).